The following is a 548-amino-acid chain: Folylpolyglutamate synthase (548 aa).

Position 130–133 (130–133 (GKGS)) interacts with ATP. Residues serine 157, glutamate 234, and histidine 262 each coordinate Mg(2+). Residues arginine 382 and aspartate 396 each coordinate ATP.

The protein belongs to the folylpolyglutamate synthase family. A monovalent cation is required as a cofactor.

The protein resides in the mitochondrion inner membrane. It localises to the mitochondrion matrix. It is found in the cytoplasm. The enzyme catalyses (6S)-5,6,7,8-tetrahydrofolyl-(gamma-L-Glu)(n) + L-glutamate + ATP = (6S)-5,6,7,8-tetrahydrofolyl-(gamma-L-Glu)(n+1) + ADP + phosphate + H(+). It participates in cofactor biosynthesis; tetrahydrofolylpolyglutamate biosynthesis. Functionally, catalyzes conversion of folates to polyglutamate derivatives allowing concentration of folate compounds in the cell and the intracellular retention of these cofactors, which are important substrates for most of the folate-dependent enzymes that are involved in one-carbon transfer reactions involved in purine, pyrimidine and amino acid synthesis. Required for methionine synthesis and maintenance of intact mitochondrial DNA. Involved in telomere maintenance. The protein is Folylpolyglutamate synthase of Saccharomyces cerevisiae (strain FostersO) (Baker's yeast).